A 963-amino-acid polypeptide reads, in one-letter code: Iron-responsive element-binding protein 2 (963 aa).

3 residues coordinate [4Fe-4S] cluster: Cys512, Cys578, and Cys581.

This sequence belongs to the aconitase/IPM isomerase family. In terms of assembly, interacts with RBCK1 isoform 1 and isoform 2 only in iron-rich conditions. Interacts (when associated with the 4Fe-4S) with FBXL5. Interacts with CIAO1 and CIAO2A. It depends on [4Fe-4S] cluster as a cofactor. Ubiquitinated and degraded by the proteasome in presence of high level of iron and oxygen. Ubiquitinated by a SCF complex containing FBXL5. Upon iron and oxygen depletion FBXL5 is degraded, preventing ubiquitination and allowing its RNA-binding activity.

The protein localises to the cytoplasm. Its function is as follows. RNA-binding protein that binds to iron-responsive elements (IRES), which are stem-loop structures found in the 5'-UTR of ferritin, and delta aminolevulinic acid synthase mRNAs, and in the 3'-UTR of transferrin receptor mRNA. Binding to the IRE element in ferritin results in the repression of its mRNA translation. Binding of the protein to the transferrin receptor mRNA inhibits the degradation of this otherwise rapidly degraded mRNA. In Homo sapiens (Human), this protein is Iron-responsive element-binding protein 2 (IREB2).